The primary structure comprises 203 residues: MTQDRPLLAVQEALKKCFPVVEEQQGLWQSALRDCQPLLSSLSNLAEQLQAAQNLRFEDVPALRAFPDLKERLRRKQLVAGDIVLDKLGERLAILLKVRDMVSSHVERVFQIYEQHADTVGIDAVLQPSAVSPSVADMLEWLQDIERHYRKSYLKRKYLLSSIQWGDLANIQALPKAWDRISKDEHQDLVQDILLNVSFFLEE.

Part of the 55LCC heterohexameric ATPase complex composed at least of AIRIM, AFG2A, AFG2B and CINP. Does not associate with pre-60S ribosomal particles. Phosphorylated on serines by CK2 kinase.

It is found in the nucleus. Its subcellular location is the cytoplasm. Its function is as follows. Part of the 55LCC heterohexameric ATPase complex which is chromatin-associated and promotes replisome proteostasis to maintain replication fork progression and genome stability. Required for replication fork progression, sister chromatid cohesion, and chromosome stability. The ATPase activity is specifically enhanced by replication fork DNA and is coupled to cysteine protease-dependent cleavage of replisome substrates in response to replication fork damage. Uses ATPase activity to process replisome substrates in S-phase, facilitating their proteolytic turnover from chromatin to ensure DNA replication and mitotic fidelity. Involved in the cytoplasmic maturation steps of pre-60S ribosomal particles by promoting the release of shuttling protein RSL24D1/RLP24 from the pre-ribosomal particles. The polypeptide is AFG2-interacting ribosome maturation factor (Homo sapiens (Human)).